A 284-amino-acid polypeptide reads, in one-letter code: MPAQLLDGNALSKKLRTEIAARSAIVTAKGTRPGLAVIVVGDNPASQVYVRNKVKACEDVGFHSVLERYTAELGEEELLARIATLNADPAIHGILVQLPLPEHIASERVLEAIAPEKDVDGFHVANAGALMVGQSEFKPCTPYGCMKILESIEYPIRSARAVIVGASNIVGKPMAMLLLQAGATVTICNSKTRDLAHHTKDADILVVATGKPKMISGDMVKNGAVVIDVGINRLPDGKLCGDVDFDTAKYVAGWITPVPGGVGPMTITMLLMNTLEAAEKAAKH.

Residues 165–167 (GAS), S190, and I231 each bind NADP(+).

The protein belongs to the tetrahydrofolate dehydrogenase/cyclohydrolase family. In terms of assembly, homodimer.

The catalysed reaction is (6R)-5,10-methylene-5,6,7,8-tetrahydrofolate + NADP(+) = (6R)-5,10-methenyltetrahydrofolate + NADPH. The enzyme catalyses (6R)-5,10-methenyltetrahydrofolate + H2O = (6R)-10-formyltetrahydrofolate + H(+). It participates in one-carbon metabolism; tetrahydrofolate interconversion. In terms of biological role, catalyzes the oxidation of 5,10-methylenetetrahydrofolate to 5,10-methenyltetrahydrofolate and then the hydrolysis of 5,10-methenyltetrahydrofolate to 10-formyltetrahydrofolate. The protein is Bifunctional protein FolD of Polynucleobacter necessarius subsp. necessarius (strain STIR1).